A 611-amino-acid polypeptide reads, in one-letter code: Dihydroxy-acid dehydratase (611 aa).

Position 81 (D81) interacts with Mg(2+). C122 is a binding site for [2Fe-2S] cluster. 2 residues coordinate Mg(2+): D123 and K124. K124 carries the post-translational modification N6-carboxylysine. Residue C195 coordinates [2Fe-2S] cluster. Position 491 (E491) interacts with Mg(2+). Catalysis depends on S517, which acts as the Proton acceptor.

It belongs to the IlvD/Edd family. As to quaternary structure, homodimer. [2Fe-2S] cluster serves as cofactor. The cofactor is Mg(2+).

The enzyme catalyses (2R)-2,3-dihydroxy-3-methylbutanoate = 3-methyl-2-oxobutanoate + H2O. It carries out the reaction (2R,3R)-2,3-dihydroxy-3-methylpentanoate = (S)-3-methyl-2-oxopentanoate + H2O. Its pathway is amino-acid biosynthesis; L-isoleucine biosynthesis; L-isoleucine from 2-oxobutanoate: step 3/4. The protein operates within amino-acid biosynthesis; L-valine biosynthesis; L-valine from pyruvate: step 3/4. In terms of biological role, functions in the biosynthesis of branched-chain amino acids. Catalyzes the dehydration of (2R,3R)-2,3-dihydroxy-3-methylpentanoate (2,3-dihydroxy-3-methylvalerate) into 2-oxo-3-methylpentanoate (2-oxo-3-methylvalerate) and of (2R)-2,3-dihydroxy-3-methylbutanoate (2,3-dihydroxyisovalerate) into 2-oxo-3-methylbutanoate (2-oxoisovalerate), the penultimate precursor to L-isoleucine and L-valine, respectively. This chain is Dihydroxy-acid dehydratase, found in Pasteurella multocida (strain Pm70).